We begin with the raw amino-acid sequence, 880 residues long: uncharacterized protein (880 aa).

Disordered regions lie at residues 101–149, 191–224, 240–273, 294–350, 425–446, 470–508, 536–561, 580–613, 682–713, and 844–880; these read KPIP…LRSE, PETS…ISTH, TTTT…PILK, NSNS…STTS, QPDS…ESQP, STST…SSSS, MESS…NDNS, APQS…NDDE, NTNT…NINN, and NSSG…KSEI. Residues 113–147 are a coiled coil; sequence ISIKEKEKEKEKEKEKEKEKEKEKEKEMKSTINLR. Over residues 115-149 the composition is skewed to basic and acidic residues; sequence IKEKEKEKEKEKEKEKEKEKEKEKEMKSTINLRSE. Low complexity-rich tracts occupy residues 193 to 223 and 240 to 256; these read TSTP…SIST and TTTT…PSSS. Positions 257 to 271 are enriched in polar residues; the sequence is IAGITNPTSRSSSPI. Residues 294-332 show a composition bias toward low complexity; the sequence is NSNSSSGGGNNNNKSISTPSSPIISRPITNKINNNNNNN. Residues 333–342 are compositionally biased toward polar residues; it reads QPQLHYNQPQ. Residues 536–548 show a composition bias toward low complexity; it reads MESSTTTTLLSEN. The span at 589–613 shows a compositional bias: acidic residues; the sequence is QPEDDPFFDFEDLSDDDDSNDNDDE. Positions 844–864 are enriched in low complexity; it reads NSSGSGNNSNDNSGSSSPSSS. The segment covering 865–880 has biased composition (polar residues); it reads KTNTLNQQSICIKSEI.

This is an uncharacterized protein from Dictyostelium discoideum (Social amoeba).